We begin with the raw amino-acid sequence, 331 residues long: Tetraacyldisaccharide 4'-kinase (331 aa).

60 to 67 contacts ATP; it reads TVGGTGKT.

It belongs to the LpxK family.

The enzyme catalyses a lipid A disaccharide + ATP = a lipid IVA + ADP + H(+). It participates in glycolipid biosynthesis; lipid IV(A) biosynthesis; lipid IV(A) from (3R)-3-hydroxytetradecanoyl-[acyl-carrier-protein] and UDP-N-acetyl-alpha-D-glucosamine: step 6/6. Transfers the gamma-phosphate of ATP to the 4'-position of a tetraacyldisaccharide 1-phosphate intermediate (termed DS-1-P) to form tetraacyldisaccharide 1,4'-bis-phosphate (lipid IVA). This chain is Tetraacyldisaccharide 4'-kinase, found in Pseudomonas syringae pv. syringae (strain B728a).